The following is a 159-amino-acid chain: Ribosomal RNA large subunit methyltransferase H (159 aa).

S-adenosyl-L-methionine is bound by residues leucine 76, glycine 108, and 127-132 (LSRLTF).

Belongs to the RNA methyltransferase RlmH family. In terms of assembly, homodimer.

The protein localises to the cytoplasm. The enzyme catalyses pseudouridine(1915) in 23S rRNA + S-adenosyl-L-methionine = N(3)-methylpseudouridine(1915) in 23S rRNA + S-adenosyl-L-homocysteine + H(+). Its function is as follows. Specifically methylates the pseudouridine at position 1915 (m3Psi1915) in 23S rRNA. In Syntrophomonas wolfei subsp. wolfei (strain DSM 2245B / Goettingen), this protein is Ribosomal RNA large subunit methyltransferase H.